The sequence spans 311 residues: tRNA-cytidine(32) 2-sulfurtransferase (311 aa).

A PP-loop motif motif is present at residues Ser47–Ser52. [4Fe-4S] cluster contacts are provided by Cys122, Cys125, and Cys213.

This sequence belongs to the TtcA family. Homodimer. It depends on Mg(2+) as a cofactor. [4Fe-4S] cluster is required as a cofactor.

Its subcellular location is the cytoplasm. The enzyme catalyses cytidine(32) in tRNA + S-sulfanyl-L-cysteinyl-[cysteine desulfurase] + AH2 + ATP = 2-thiocytidine(32) in tRNA + L-cysteinyl-[cysteine desulfurase] + A + AMP + diphosphate + H(+). Its pathway is tRNA modification. In terms of biological role, catalyzes the ATP-dependent 2-thiolation of cytidine in position 32 of tRNA, to form 2-thiocytidine (s(2)C32). The sulfur atoms are provided by the cysteine/cysteine desulfurase (IscS) system. The chain is tRNA-cytidine(32) 2-sulfurtransferase from Escherichia coli O157:H7.